A 228-amino-acid chain; its full sequence is DNA mismatch repair protein MutH (228 aa).

Belongs to the MutH family.

The protein resides in the cytoplasm. Sequence-specific endonuclease that cleaves unmethylated GATC sequences. It is involved in DNA mismatch repair. The sequence is that of DNA mismatch repair protein MutH from Yersinia pseudotuberculosis serotype O:1b (strain IP 31758).